A 310-amino-acid polypeptide reads, in one-letter code: Ribose-phosphate pyrophosphokinase (310 aa).

Residues Asp-34–Glu-36 and Arg-93–Gln-94 contribute to the ATP site. Residues His-127 and Asp-167 each coordinate Mg(2+). Lys-190 is an active-site residue. Residues Arg-192, Asp-216, and Asp-220 to Thr-224 each bind D-ribose 5-phosphate.

The protein belongs to the ribose-phosphate pyrophosphokinase family. Class I subfamily. As to quaternary structure, homohexamer. Mg(2+) serves as cofactor.

It localises to the cytoplasm. The enzyme catalyses D-ribose 5-phosphate + ATP = 5-phospho-alpha-D-ribose 1-diphosphate + AMP + H(+). It functions in the pathway metabolic intermediate biosynthesis; 5-phospho-alpha-D-ribose 1-diphosphate biosynthesis; 5-phospho-alpha-D-ribose 1-diphosphate from D-ribose 5-phosphate (route I): step 1/1. Involved in the biosynthesis of the central metabolite phospho-alpha-D-ribosyl-1-pyrophosphate (PRPP) via the transfer of pyrophosphoryl group from ATP to 1-hydroxyl of ribose-5-phosphate (Rib-5-P). The polypeptide is Ribose-phosphate pyrophosphokinase (Rhizobium meliloti (strain 1021) (Ensifer meliloti)).